The chain runs to 198 residues: Pyridoxal 5'-phosphate synthase subunit PdxT (198 aa).

49-51 (GES) serves as a coordination point for L-glutamine. The active-site Nucleophile is C81. L-glutamine contacts are provided by residues R113 and 141–142 (IR). Active-site charge relay system residues include H177 and E179.

The protein belongs to the glutaminase PdxT/SNO family. In terms of assembly, in the presence of PdxS, forms a dodecamer of heterodimers. Only shows activity in the heterodimer.

The catalysed reaction is aldehydo-D-ribose 5-phosphate + D-glyceraldehyde 3-phosphate + L-glutamine = pyridoxal 5'-phosphate + L-glutamate + phosphate + 3 H2O + H(+). It catalyses the reaction L-glutamine + H2O = L-glutamate + NH4(+). The protein operates within cofactor biosynthesis; pyridoxal 5'-phosphate biosynthesis. In terms of biological role, catalyzes the hydrolysis of glutamine to glutamate and ammonia as part of the biosynthesis of pyridoxal 5'-phosphate. The resulting ammonia molecule is channeled to the active site of PdxS. This Mycobacterium ulcerans (strain Agy99) protein is Pyridoxal 5'-phosphate synthase subunit PdxT.